Consider the following 61-residue polypeptide: Lens epithelial cell protein LEP503 (61 aa).

As to expression, restricted to lens epithelial cells.

May play a role in lens epithelial cell differentiation. The sequence is that of Lens epithelial cell protein LEP503 (LENEP) from Homo sapiens (Human).